The following is a 113-amino-acid chain: Hydrogenase maturation factor HypA (113 aa).

H2 is a Ni(2+) binding site. The Zn(2+) site is built by C73, C75, C89, and C92.

Belongs to the HypA/HybF family.

In terms of biological role, involved in the maturation of [NiFe] hydrogenases. Required for nickel insertion into the metal center of the hydrogenase. This chain is Hydrogenase maturation factor HypA, found in Methanocella arvoryzae (strain DSM 22066 / NBRC 105507 / MRE50).